A 177-amino-acid chain; its full sequence is Large ribosomal subunit protein uL6 (177 aa).

Belongs to the universal ribosomal protein uL6 family. Part of the 50S ribosomal subunit.

Its function is as follows. This protein binds to the 23S rRNA, and is important in its secondary structure. It is located near the subunit interface in the base of the L7/L12 stalk, and near the tRNA binding site of the peptidyltransferase center. In Shewanella denitrificans (strain OS217 / ATCC BAA-1090 / DSM 15013), this protein is Large ribosomal subunit protein uL6.